Reading from the N-terminus, the 341-residue chain is Acetylpolyamine amidohydrolase (341 aa).

Positions 19, 106, and 117 each coordinate substrate. His-159 (proton donor/acceptor) is an active-site residue. The Zn(2+) site is built by Asp-195, His-197, and Asp-284. Tyr-323 contacts substrate.

The protein belongs to the histone deacetylase family. As to quaternary structure, homodimer. Zn(2+) serves as cofactor.

The catalysed reaction is N-acetylputrescine + H2O = putrescine + acetate. It carries out the reaction N-acetylcadaverine + H2O = cadaverine + acetate. It catalyses the reaction N(1)-acetylspermine + H2O = spermine + acetate. The enzyme catalyses N(1)-acetylspermidine + H2O = spermidine + acetate. The catalysed reaction is N(8)-acetylspermidine + H2O = spermidine + acetate. The protein operates within amine and polyamine metabolism. Its activity is regulated as follows. Zinc ions inhibit enzyme activity in a dose-dependent manner. Inhibited by KCl at concentrations above 10 mM. Inhibited by o-oxyquinoline in vitro, suggesting that it is a metalloprotein. Inhibited by various substrate N(8)-acetylspermidine analogs bearing different metal-binding groups such as trifluoromethylketone, thiol, or hydroxamate, and by hydroxamate analogs of short-chain acetyldiamines. Functionally, involved in polyamine metabolism. Catalyzes the deacetylation of various acetylated polyamines such as N-acetylputrescine, N-acetylcadaverine, N(1)-acetylspermine, N(1)-acetylspermidine and N(8)-acetylspermidine. In vitro, is also able to deacetylate L-Lys(epsilon-acetyl)coumarin, but has very low activity towards the larger tetrapeptide N-acetyl-L-Arg-L-His-L-Lys(epsilon-acetyl)-L-Lys(epsilon-acetyl)coumarin. This chain is Acetylpolyamine amidohydrolase, found in Mycoplana ramosa (Mycoplana bullata).